The primary structure comprises 223 residues: Kynurenine formamidase (223 aa).

Residue phenylalanine 34 participates in substrate binding. Positions 64, 68, and 70 each coordinate Zn(2+). Catalysis depends on histidine 74, which acts as the Proton donor/acceptor. Residues histidine 174 and glutamate 186 each coordinate Zn(2+).

The protein belongs to the Cyclase 1 superfamily. KynB family. Homodimer. The cofactor is Zn(2+).

The enzyme catalyses N-formyl-L-kynurenine + H2O = L-kynurenine + formate + H(+). It participates in amino-acid degradation; L-tryptophan degradation via kynurenine pathway; L-kynurenine from L-tryptophan: step 2/2. Catalyzes the hydrolysis of N-formyl-L-kynurenine to L-kynurenine, the second step in the kynurenine pathway of tryptophan degradation. This is Kynurenine formamidase from Polaromonas naphthalenivorans (strain CJ2).